A 460-amino-acid chain; its full sequence is MIWNTNLRWRLPVACLLLEVALIALFGVFVRYDMDADPHWVQEKVIKNLSTDLENEFYYRYPSFQDVHVMIFVGFGFLMTFLQRYGYSSVGFNFLLAAFGIQWALLMQGWLQSFDGRYILVDLENLINADFCVGSVCVAFGAVLGKVSPVQLLIMTLFQVTLFSINEYILLNLLEVKDSGGSMTIHAFGAYFGLTVAWILYRPNLHLSKERQSSTYHSDLFAMIGTLFLWMYWPSFNSAISNHGDAQHRAAINTYCSLAACVLTSVALSSALHRKGKLDMVHIQNATLAGGVGLGTVAELMVLPFGSLIIGFVCGIVSTLGFVYLTPFLESRLHIQDTCGVHNLHGIPGIIGGIAGAVTASIANIDLYGEEGLAYAFGIERSKLNWSPNMQGRFQAAGLFVSLAMALVGGVIVGVILRLPFWGQAPDENCFEDAVYWEIPKEPKSTALRSEDSSIKPPEP.

Residues 1–9 lie on the Cytoplasmic side of the membrane; it reads MIWNTNLRW. The chain crosses the membrane as a helical span at residues 10–30; sequence RLPVACLLLEVALIALFGVFV. Topologically, residues 31-61 are extracellular; the sequence is RYDMDADPHWVQEKVIKNLSTDLENEFYYRY. Asn48 is a glycosylation site (N-linked (GlcNAc...) asparagine). Residues 62–82 traverse the membrane as a helical segment; that stretch reads PSFQDVHVMIFVGFGFLMTFL. Over 83 to 89 the chain is Cytoplasmic; that stretch reads QRYGYSS. Residues 90–110 traverse the membrane as a helical segment; it reads VGFNFLLAAFGIQWALLMQGW. The Extracellular portion of the chain corresponds to 111 to 125; sequence LQSFDGRYILVDLEN. The helical transmembrane segment at 126 to 145 threads the bilayer; the sequence is LINADFCVGSVCVAFGAVLG. Residues 146 to 151 are Cytoplasmic-facing; the sequence is KVSPVQ. The helical transmembrane segment at 152 to 174 threads the bilayer; sequence LLIMTLFQVTLFSINEYILLNLL. The Extracellular portion of the chain corresponds to 175–179; sequence EVKDS. The helical transmembrane segment at 180-200 threads the bilayer; it reads GGSMTIHAFGAYFGLTVAWIL. At 201–219 the chain is on the cytoplasmic side; sequence YRPNLHLSKERQSSTYHSD. The chain crosses the membrane as a helical span at residues 220–240; the sequence is LFAMIGTLFLWMYWPSFNSAI. Residues 241-251 are Extracellular-facing; it reads SNHGDAQHRAA. Residues 252–272 form a helical membrane-spanning segment; that stretch reads INTYCSLAACVLTSVALSSAL. The Cytoplasmic portion of the chain corresponds to 273-285; sequence HRKGKLDMVHIQN. Residues 286 to 303 form a helical membrane-spanning segment; it reads ATLAGGVGLGTVAELMVL. Residues 304–306 are Extracellular-facing; the sequence is PFG. A helical membrane pass occupies residues 307 to 329; it reads SLIIGFVCGIVSTLGFVYLTPFL. The Cytoplasmic segment spans residues 330-346; that stretch reads ESRLHIQDTCGVHNLHG. The chain crosses the membrane as a helical span at residues 347 to 367; that stretch reads IPGIIGGIAGAVTASIANIDL. Topologically, residues 368–396 are extracellular; that stretch reads YGEEGLAYAFGIERSKLNWSPNMQGRFQA. A helical transmembrane segment spans residues 397–417; that stretch reads AGLFVSLAMALVGGVIVGVIL. Residues 418 to 460 lie on the Cytoplasmic side of the membrane; the sequence is RLPFWGQAPDENCFEDAVYWEIPKEPKSTALRSEDSSIKPPEP.

This sequence belongs to the ammonium transporter (TC 2.A.49) family. Rh subfamily. As to quaternary structure, homotrimer. In terms of processing, N-glycosylated.

It is found in the apical cell membrane. It carries out the reaction NH4(+)(in) = NH4(+)(out). It catalyses the reaction methylamine(out) = methylamine(in). The enzyme catalyses CO2(out) = CO2(in). Its function is as follows. Ammonium transporter involved in the maintenance of acid-base homeostasis. Transports ammonium and its related derivative methylammonium across the plasma membrane of epithelial cells likely contributing to renal transepithelial ammonia transport and ammonia metabolism. Postulated to primarily mediate an electroneutral bidirectional transport of NH3 ammonia species according to a mechanism that implies interaction of an NH4(+) ion with acidic residues of the pore entry followed by dissociation of NH4(+) into NH3 and H(+). As a result NH3 transits through the central pore and is protonated on the extracellular side reforming NH4(+). May act as a CO2 channel providing for renal acid secretion. The sequence is that of Ammonium transporter Rh type C (RHCG) from Bos taurus (Bovine).